Here is a 185-residue protein sequence, read N- to C-terminus: MKIIAGLGNPGQKYDKTKHNTGFMTMDHYLDKKGLTLNKDKFEGHWTKEKINGEDVIFLEPQTYMNESGRSVSQIANFFKVAPEDVLIIQDDMDMPIGKIRIRANGKSGGHNGIKSIIRDLGTEKFNRLKIGIRHPKNATVVSWVLTPFNDEQQKLMDDAFDTSVDIIDDFIAGRDSQYLMNKYN.

Y14 lines the tRNA pocket. Catalysis depends on H19, which acts as the Proton acceptor. TRNA contacts are provided by Y64, N66, and N112.

It belongs to the PTH family. In terms of assembly, monomer.

It localises to the cytoplasm. The catalysed reaction is an N-acyl-L-alpha-aminoacyl-tRNA + H2O = an N-acyl-L-amino acid + a tRNA + H(+). Functionally, hydrolyzes ribosome-free peptidyl-tRNAs (with 1 or more amino acids incorporated), which drop off the ribosome during protein synthesis, or as a result of ribosome stalling. Its function is as follows. Catalyzes the release of premature peptidyl moieties from peptidyl-tRNA molecules trapped in stalled 50S ribosomal subunits, and thus maintains levels of free tRNAs and 50S ribosomes. The protein is Peptidyl-tRNA hydrolase of Lactobacillus acidophilus (strain ATCC 700396 / NCK56 / N2 / NCFM).